The sequence spans 767 residues: Transducin-like enhancer protein 1 (767 aa).

Disordered stretches follow at residues 1–26 (MFPQ…PPQS) and 200–346 (ADAE…TSAS). Composition is skewed to basic and acidic residues over residues 200–209 (ADAEHRERDP), 235–255 (RKTE…RSED), and 277–289 (NGVD…RKDP). The CCN domain stretch occupies residues 212–274 (SCLTLPNGER…SPHSVHSYSS (63 aa)). The span at 294–306 (PNSMTSSSSVSPS) shows a compositional bias: low complexity. The span at 324–346 (LKSSTPNSQSDLNTPGPSGTSAS) shows a compositional bias: polar residues. WD repeat units follow at residues 467 to 498 (GIPR…HVYT), 525 to 555 (NRDN…SIWD), 569 to 599 (SSAP…VVWD), 611 to 641 (GHTD…RCWD), 693 to 723 (LHES…NAWR), and 734 to 764 (KESS…TVYE).

The protein belongs to the WD repeat Groucho/TLE family. Ubiquitinated by XIAP/BIRC4. As to expression, abundantly expressed in brain, lung, testis and ovary in comparison with liver, heart, kidney and spleen. Ubiquitously expressed in the developing embryo. Present in unfertilized and fertilized eggs.

The protein localises to the nucleus. Functionally, nuclear effector molecule. The sequence is that of Transducin-like enhancer protein 1 (esg1) from Xenopus laevis (African clawed frog).